Consider the following 211-residue polypeptide: Redox-sensing transcriptional repressor Rex (211 aa).

The H-T-H motif DNA-binding region spans 17-56 (LYYRLVSILKGKGIDRVNSKTISEALQIDSATIRRDFSYF). Residue 91 to 96 (GIGNLG) participates in NAD(+) binding.

It belongs to the transcriptional regulatory Rex family. Homodimer.

Its subcellular location is the cytoplasm. Modulates transcription in response to changes in cellular NADH/NAD(+) redox state. The chain is Redox-sensing transcriptional repressor Rex from Staphylococcus epidermidis (strain ATCC 12228 / FDA PCI 1200).